The following is a 402-amino-acid chain: Sulfate adenylyltransferase (402 aa).

The protein belongs to the sulfate adenylyltransferase family.

The catalysed reaction is sulfate + ATP + H(+) = adenosine 5'-phosphosulfate + diphosphate. The protein operates within sulfur metabolism; hydrogen sulfide biosynthesis; sulfite from sulfate: step 1/3. The chain is Sulfate adenylyltransferase from Ruthia magnifica subsp. Calyptogena magnifica.